The primary structure comprises 295 residues: Indole-3-glycerol phosphate synthase (295 aa).

The protein belongs to the TrpC family.

The catalysed reaction is 1-(2-carboxyphenylamino)-1-deoxy-D-ribulose 5-phosphate + H(+) = (1S,2R)-1-C-(indol-3-yl)glycerol 3-phosphate + CO2 + H2O. It functions in the pathway amino-acid biosynthesis; L-tryptophan biosynthesis; L-tryptophan from chorismate: step 4/5. The protein is Indole-3-glycerol phosphate synthase of Prochlorococcus marinus (strain MIT 9515).